A 518-amino-acid polypeptide reads, in one-letter code: Probable alginate O-acetylase AlgI (518 aa).

The next 8 membrane-spanning stretches (helical) occupy residues 2–24, 39–61, 78–100, 115–137, 150–172, 319–341, 354–373, and 402–424; these read VFSS…YLSG, FYAW…NYWI, WLLL…NFGV, FILT…ISYI, NLID…VLRF, GLWH…WLAI, FNVI…WVIF, and ASLT…FFGL. Residue H322 is part of the active site. The segment at 435 to 456 is disordered; the sequence is SGKSARADGPATEQPGTIKAVP. The helical transmembrane segment at 493-515 threads the bilayer; sequence LILLLFVASILKLSAQSFSPFLY.

It belongs to the membrane-bound acyltransferase family.

Its subcellular location is the cell inner membrane. It functions in the pathway glycan biosynthesis; alginate biosynthesis. Together with AlgJ and AlgF, forms an inner membrane complex which probably interacts with the alginate polymerization-transport complex and adds acetyl groups at the O-2 and O-3 positions of mannuronate residues. Acetylation of alginate is important for the architecture of biofilms and increases the ability of alginate to act as a defense barrier. The polypeptide is Probable alginate O-acetylase AlgI (algI) (Pseudomonas syringae pv. tomato (strain ATCC BAA-871 / DC3000)).